The sequence spans 120 residues: MFVLPGYDAFLGFLLIAAAVPVLALVTNKLLAPRSQDGERQLTYESGMEPIGGAWIQFNIRYYMFALVFVIFDVETVFLYPWAVAFHRLGLLAFIEALIFIAILVVALAYAWRKGALEWS.

The next 3 helical transmembrane spans lie at 6–26 (GYDA…LALV), 64–84 (MFAL…PWAV), and 89–109 (LGLL…VALA).

The protein belongs to the complex I subunit 3 family. NDH-1 can be composed of about 15 different subunits; different subcomplexes with different compositions have been identified which probably have different functions.

The protein resides in the cellular thylakoid membrane. The catalysed reaction is a plastoquinone + NADH + (n+1) H(+)(in) = a plastoquinol + NAD(+) + n H(+)(out). It catalyses the reaction a plastoquinone + NADPH + (n+1) H(+)(in) = a plastoquinol + NADP(+) + n H(+)(out). Its function is as follows. NDH-1 shuttles electrons from an unknown electron donor, via FMN and iron-sulfur (Fe-S) centers, to quinones in the respiratory and/or the photosynthetic chain. The immediate electron acceptor for the enzyme in this species is believed to be plastoquinone. Couples the redox reaction to proton translocation, and thus conserves the redox energy in a proton gradient. Cyanobacterial NDH-1 also plays a role in inorganic carbon-concentration. This chain is NAD(P)H-quinone oxidoreductase subunit 3, found in Synechococcus sp. (strain WH7803).